We begin with the raw amino-acid sequence, 639 residues long: 2-oxoacid:ferredoxin oxidoreductase 1, subunit alpha (639 aa).

The YPITP motif motif lies at 266 to 270 (YPITP). Thr269 and Arg352 together coordinate substrate.

Heterodimer composed of an alpha and a beta subunit.

The enzyme catalyses a 2-oxocarboxylate + 2 oxidized [2Fe-2S]-[ferredoxin] + CoA = an acyl-CoA + 2 reduced [2Fe-2S]-[ferredoxin] + CO2 + H(+). Its function is as follows. Catalyzes the coenzyme A-dependent oxidative decarboxylation of different 2-oxoacids such as pyruvate, 2-oxobutyrate and glyoxylate to form their CoA derivatives. The chain is 2-oxoacid:ferredoxin oxidoreductase 1, subunit alpha from Aeropyrum pernix (strain ATCC 700893 / DSM 11879 / JCM 9820 / NBRC 100138 / K1).